The sequence spans 473 residues: Digalactosyldiacylglycerol synthase 2, chloroplastic (473 aa).

2 interaction with the membrane lipid bilayer regions span residues leucine 130–glycine 148 and glutamine 227–tyrosine 245.

This sequence belongs to the glycosyltransferase group 1 family. Glycosyltransferase 4 subfamily. Expressed in leaves, flowers and roots, but not in stems and siliques.

It is found in the plastid. It localises to the chloroplast outer membrane. It carries out the reaction a 1,2-diacyl-3-O-(beta-D-galactosyl)-sn-glycerol + UDP-alpha-D-galactose = a 1,2-diacyl-3-O-[alpha-D-galactosyl-(1-&gt;6)-beta-D-galactosyl]-sn-glycerol + UDP + H(+). Its activity is regulated as follows. Stimulated by anionic phospholipids. In terms of biological role, involved in the synthesis of diacylglycerol galactolipids that are specifically found in thylakoid membranes. Specific for alpha-glycosidic linkages. During phosphate shortage, involved in the biosynthesis of digalactosyldiacylglycerol (DGDG) which rescues the limitation of phospholipids. In Arabidopsis thaliana (Mouse-ear cress), this protein is Digalactosyldiacylglycerol synthase 2, chloroplastic.